The primary structure comprises 335 residues: Tetraacyldisaccharide 4'-kinase (335 aa).

51–58 lines the ATP pocket; it reads HVGGAGKT.

The protein belongs to the LpxK family.

It catalyses the reaction a lipid A disaccharide + ATP = a lipid IVA + ADP + H(+). It participates in glycolipid biosynthesis; lipid IV(A) biosynthesis; lipid IV(A) from (3R)-3-hydroxytetradecanoyl-[acyl-carrier-protein] and UDP-N-acetyl-alpha-D-glucosamine: step 6/6. In terms of biological role, transfers the gamma-phosphate of ATP to the 4'-position of a tetraacyldisaccharide 1-phosphate intermediate (termed DS-1-P) to form tetraacyldisaccharide 1,4'-bis-phosphate (lipid IVA). The protein is Tetraacyldisaccharide 4'-kinase of Nitrobacter hamburgensis (strain DSM 10229 / NCIMB 13809 / X14).